Here is a 372-residue protein sequence, read N- to C-terminus: Putative neuropeptide precursor protein (372 aa).

A signal peptide spans 1–17; sequence MLLFSLTAITAVLAVSA. Disordered stretches follow at residues 18–89 and 136–208; these read VPTP…SNGE and VTKS…KRDS. Residues 19–31 show a composition bias toward polar residues; that stretch reads PTPSNNKDGSTIS. The span at 38–57 shows a compositional bias: basic and acidic residues; it reads DQTKDDNRSLFLNKSDKNDL. Residues 72 to 89 show a composition bias toward polar residues; sequence GYDQTVDQRFDSPQSNGE. Residues 177-191 are compositionally biased toward low complexity; it reads GGAAASAKTATKNSG.

Post-translationally, may be proteolytically processed to give rise to a number of active peptides. Detected in the brain and frontal ganglion and in the axons connecting to the corpus cardiacum and corpus allatum (at protein level). Detected in the brain-subesophageal ganglion (brain-SG) complex, fat body, midgut and ovary. Expression in the brain-SG complex is 2-3 times higher than in the other tissues.

Its subcellular location is the cytoplasm. It localises to the secreted. In Bombyx mori (Silk moth), this protein is Putative neuropeptide precursor protein.